Consider the following 327-residue polypeptide: Acyl-CoA desaturase (327 aa).

At 1–39 (MPDREIKSPIWHPEPGTVEDVFDHTYKEKEGPKPPTVIV) the chain is on the cytoplasmic side. The chain crosses the membrane as a helical span at residues 40-60 (WRNVILMSLLHLGALYGLFLF). Residue Asn42 participates in substrate binding. Over 61–64 (PSAR) the chain is Lumenal. A helical transmembrane segment spans residues 65–85 (ALTWIWFFGCLLFSALGITAG). Residues 86-184 (AHRLWSHRSY…DKVVMFQRRF (99 aa)) are Cytoplasmic-facing. Fe cation is bound by residues His87 and His92. The Histidine box-1 signature appears at 87–92 (HRLWSH). Substrate is bound by residues Asn115, Arg122, and Asp123. The Fe cation site is built by His124, His127, and His128. The Histidine box-2 signature appears at 124 to 128 (HRVHH). Arg155 and Lys156 together coordinate substrate. The helical transmembrane segment at 185–204 (YKPSVLLMCFFVPTFVPWYV) threads the bilayer. Over 205–208 (WGES) the chain is Lumenal. The chain crosses the membrane as a helical span at residues 209-230 (LWVAYFVPALLRYALVLNATWL). Trp229 contributes to the substrate binding site. Residues 231 to 327 (VNSAAHMWGN…RTGDGSHWSG (97 aa)) are Cytoplasmic-facing. His236, His265, His268, and His269 together coordinate Fe cation. Residues 265 to 269 (HNYHH) carry the Histidine box-3 motif.

This sequence belongs to the fatty acid desaturase type 1 family. The cofactor is Fe(2+).

Its subcellular location is the endoplasmic reticulum membrane. The catalysed reaction is octadecanoyl-CoA + 2 Fe(II)-[cytochrome b5] + O2 + 2 H(+) = (9Z)-octadecenoyl-CoA + 2 Fe(III)-[cytochrome b5] + 2 H2O. Its function is as follows. Stearoyl-CoA desaturase that utilizes O(2) and electrons from reduced cytochrome b5 to introduce the first double bond into saturated fatty acyl-CoA substrates. Has high specificity and catalyzes the insertion of a cis double bond at the delta-9 position into fatty acyl-CoA substrates including palmitoyl-CoA and stearoyl-CoA. Contributes to the biosynthesis of membrane phospholipids, cholesterol esters and triglycerides. The polypeptide is Acyl-CoA desaturase (Cyprinus carpio (Common carp)).